Here is a 198-residue protein sequence, read N- to C-terminus: Putative transposase InsO for insertion sequence element IS911B (198 aa).

Positions 105–198 (AVTEPNQVWC…YCGDTGSGRV (94 aa)) constitute an Integrase catalytic domain.

Involved in the transposition of the insertion sequence IS911B. The protein is Putative transposase InsO for insertion sequence element IS911B (insO2) of Escherichia coli (strain K12).